Reading from the N-terminus, the 192-residue chain is MRRFVVVGHRAVTTPKFSLNDLPGGAGRMDIIARCVNASLFLSHDLRRDVEFFAILLGEPTPPVTIKFSGEHVRYLSPDERSPAALIKKALERGIPVEGEAEATPGVYISKRSFADLINGMDNLVYLHEDGEDIRSVELTGNETFVLSDHQNLTPEEEAVLEAKGAKKVSLGKKLYHADHCIVMVNWETDRR.

S-adenosyl-L-methionine is bound by residues L127 and C181.

The protein belongs to the methyltransferase superfamily. TrmY family. Homodimer.

The protein localises to the cytoplasm. The enzyme catalyses pseudouridine(54) in tRNA + S-adenosyl-L-methionine = N(1)-methylpseudouridine(54) in tRNA + S-adenosyl-L-homocysteine + H(+). Functionally, specifically catalyzes the N1-methylation of pseudouridine at position 54 (Psi54) in tRNAs. In Methanocella arvoryzae (strain DSM 22066 / NBRC 105507 / MRE50), this protein is tRNA (pseudouridine(54)-N(1))-methyltransferase.